The sequence spans 2367 residues: Probable G-protein coupled receptor 179 (2367 aa).

Residues 1-25 (MGTRGAVMPPPMWGLLGCCFVCAWA) form the signal peptide. At 26-381 (LGGPRPIRSL…CLVEEAAVLR (356 aa)) the chain is on the extracellular side. Residues 62–245 (YLYSGDAQQL…CQEGRLRPGW (184 aa)) are cache-like region. N-linked (GlcNAc...) asparagine glycosylation occurs at Asn75. Cysteines 76 and 236 form a disulfide. A glycan (N-linked (GlcNAc...) asparagine) is linked at Asn298. The helical transmembrane segment at 382-402 (AAVLACQACCMLAIFLSMLVS) threads the bilayer. At 403 to 415 (YRCRRNKRIWASG) the chain is on the cytoplasmic side. Residues 416 to 436 (VVLLETVLFGFLLLYFPVFIL) form a helical membrane-spanning segment. The Extracellular portion of the chain corresponds to 437-444 (YFKPSVFR). Residues 445–465 (CIALRWVRLLGFAIVYGTIIL) traverse the membrane as a helical segment. Cys445 and Cys537 form a disulfide bridge. Residues 466–493 (KLYRVLQLFLSRTAQRSALLSSGRLLRR) are Cytoplasmic-facing. A helical membrane pass occupies residues 494–514 (LGLLLLPVLGFLAVWTVGALE). The Extracellular portion of the chain corresponds to 515–543 (RGIQHAPLVIRGHTPSGRHFYLCHHDRWD). A helical transmembrane segment spans residues 544–564 (YIMVVAELLLLCWGSFLCYAT). The Cytoplasmic portion of the chain corresponds to 565–575 (RAVLSAFHEPR). A helical membrane pass occupies residues 576–594 (YMGIALHNELLLSAAFHTA). Residues 595–607 (RFVLVPSLHPDWT) lie on the Extracellular side of the membrane. Residues 608-628 (LLLFFFHTHSTVTTTLALIFI) traverse the membrane as a helical segment. Topologically, residues 629-2367 (PKFWKLGAPP…PPTVYPWDWE (1739 aa)) are cytoplasmic. Disordered stretches follow at residues 731 to 818 (ARQH…FRSA), 869 to 932 (REER…PHPP), 1039 to 1083 (KSRA…QQGS), 1098 to 1198 (RSTY…AGKT), 1247 to 1431 (EVTE…CPWE), 1537 to 1557 (PRES…SSKA), 1577 to 1672 (DLRP…ERPQ), 1723 to 1757 (AIRK…PTPE), 1823 to 1852 (SEGT…KGRL), 1886 to 2108 (AQAP…GSVE), 2133 to 2212 (WEAG…KEAG), and 2308 to 2367 (GVRE…WDWE). Over residues 738 to 759 (SGSPGHGSLPGSSRRRLLSSSL) the composition is skewed to low complexity. The segment covering 773-782 (STYDQRREQD) has biased composition (basic and acidic residues). Positions 1039–1067 (KSRAGENEMDAEDAHHQREANDVDEDRPK) are enriched in basic and acidic residues. Positions 1153-1164 (LQNQQNAHTSRM) are enriched in polar residues. Composition is skewed to basic and acidic residues over residues 1171-1181 (EGSREQEDRGR), 1277-1299 (RALR…KSEP), 1341-1362 (GRIR…EKPG), and 1390-1407 (EDGK…QEKQ). Residues 1615-1639 (ESQKDKEKMPGKSEIEDVTAWEKPE) are compositionally biased toward basic and acidic residues. Composition is skewed to basic and acidic residues over residues 1840–1851 (AEQREKALEKGR), 1903–1920 (AEGH…RQDP), 1970–1979 (SHLDRQRPDQ), 2023–2054 (VTER…KSEP), 2061–2070 (KKPEMADFRQ), and 2165–2180 (TEEH…REQE). Residues 2326 to 2340 (PEPSLQEAESQSSSL) are compositionally biased toward low complexity.

It belongs to the G-protein coupled receptor 3 family. Homodimer. Associates with the R7 group RGS-GNB5 complexes, composed of an R7 group RGS subunit (RGS6, RGS7, RGS9 or RGS11) and GNB5, promoting their localization to the cell membrane and regulating the GTPase activator activity of R7 RGS proteins. Interacts with TRPM1. Interacts with GRM6. Interacts with EGFLAM; transsynaptic interaction is required for synaptic organization of photoreceptor cells. Expressed in the retina.

Its subcellular location is the cell membrane. It localises to the postsynaptic cell membrane. The protein resides in the cell projection. It is found in the dendrite. Orphan receptor involved in vision. Required for signal transduction through retinal depolarizing bipolar cells. Acts as an atypical G-protein coupled receptor that recruits and regulates the R7 group RGS-GNB5 complexes instead of activating G proteins: promotes the GTPase activator activity of R7 RGS proteins, increasing the GTPase activity of G protein alpha subunits, thereby driving them into their inactive GDP-bound form. Associates with components of metabotropic signaling cascade in retina ON-bipolar neurons, such as TRPM1 and GRM6: may control the ability of the GRM6 cascade to gate TRPM1. This Homo sapiens (Human) protein is Probable G-protein coupled receptor 179.